The sequence spans 49 residues: MADKGDQSSYLIKFISTAPVAATIWLTITAGILIEFNRFFPDLLFHPLP.

A helical membrane pass occupies residues 14-34 (FISTAPVAATIWLTITAGILI).

It belongs to the PsaJ family.

The protein localises to the cellular thylakoid membrane. In terms of biological role, may help in the organization of the PsaE and PsaF subunits. In Nostoc punctiforme (strain ATCC 29133 / PCC 73102), this protein is Photosystem I reaction center subunit IX.